A 463-amino-acid polypeptide reads, in one-letter code: Chromosomal replication initiator protein DnaA (463 aa).

The segment at 1 to 83 (MSTNQIILTD…LQLFQHYNNT (83 aa)) is domain I, interacts with DnaA modulators. The segment at 83-124 (TIKSIEIITKELPGTTQTVTELPTKTFADIGSSELNSENIFS) is domain II. Residues 125-343 (TLDVRFTFDN…GALNKVIAHS (219 aa)) are domain III, AAA+ region. Gly171, Gly173, Lys174, and Thr175 together coordinate ATP. Residues 344–463 (NFTLKEITLE…INLLMKILQN (120 aa)) form a domain IV, binds dsDNA region.

It belongs to the DnaA family. In terms of assembly, oligomerizes as a right-handed, spiral filament on DNA at oriC.

Its subcellular location is the cytoplasm. Plays an essential role in the initiation and regulation of chromosomal replication. ATP-DnaA binds to the origin of replication (oriC) to initiate formation of the DNA replication initiation complex once per cell cycle. Binds the DnaA box (a 9 base pair repeat at the origin) and separates the double-stranded (ds)DNA. Forms a right-handed helical filament on oriC DNA; dsDNA binds to the exterior of the filament while single-stranded (ss)DNA is stabiized in the filament's interior. The ATP-DnaA-oriC complex binds and stabilizes one strand of the AT-rich DNA unwinding element (DUE), permitting loading of DNA polymerase. After initiation quickly degrades to an ADP-DnaA complex that is not apt for DNA replication. Binds acidic phospholipids. This chain is Chromosomal replication initiator protein DnaA, found in Rickettsia conorii (strain ATCC VR-613 / Malish 7).